The following is a 187-amino-acid chain: Cell division protein SepF (187 aa).

The disordered stretch occupies residues 21-97 (EVEVPDKQQQ…ATPNNASQES (77 aa)). 2 stretches are compositionally biased toward polar residues: residues 38–63 (EQSQ…YTTT) and 70–97 (RMSN…SQES).

The protein belongs to the SepF family. In terms of assembly, homodimer. Interacts with FtsZ.

It is found in the cytoplasm. Its function is as follows. Cell division protein that is part of the divisome complex and is recruited early to the Z-ring. Probably stimulates Z-ring formation, perhaps through the cross-linking of FtsZ protofilaments. Its function overlaps with FtsA. The polypeptide is Cell division protein SepF (Staphylococcus aureus (strain Mu3 / ATCC 700698)).